A 347-amino-acid polypeptide reads, in one-letter code: N-acetyl-gamma-glutamyl-phosphate reductase (347 aa).

The active site involves Cys152.

It belongs to the NAGSA dehydrogenase family. Type 1 subfamily.

Its subcellular location is the cytoplasm. It catalyses the reaction N-acetyl-L-glutamate 5-semialdehyde + phosphate + NADP(+) = N-acetyl-L-glutamyl 5-phosphate + NADPH + H(+). Its pathway is amino-acid biosynthesis; L-arginine biosynthesis; N(2)-acetyl-L-ornithine from L-glutamate: step 3/4. Functionally, catalyzes the NADPH-dependent reduction of N-acetyl-5-glutamyl phosphate to yield N-acetyl-L-glutamate 5-semialdehyde. This chain is N-acetyl-gamma-glutamyl-phosphate reductase, found in Neisseria gonorrhoeae (strain ATCC 700825 / FA 1090).